The sequence spans 560 residues: General negative regulator of transcription subunit 5 (560 aa).

Coiled-coil stretches lie at residues 3–26, 37–71, and 124–177; these read QRKL…DFDD, SNSS…SKED, and KRDQ…NEMD. The disordered stretch occupies residues 212–330; sequence CEIQPSSSNN…DSEQQLNFPP (119 aa). Residues 215–237 show a composition bias toward polar residues; that stretch reads QPSSSNNEAPKEGNNQTSLSSIR. Over residues 273 to 288 the composition is skewed to low complexity; sequence SQSISSTPTPVSTDTP. Residues 299-311 show a composition bias toward polar residues; that stretch reads FDNSTLGTPTTHV. Residue threonine 306 is modified to Phosphothreonine. Lysine 338 is covalently cross-linked (Glycyl lysine isopeptide (Lys-Gly) (interchain with G-Cter in ubiquitin)). Residue serine 377 is modified to Phosphoserine.

Belongs to the CNOT2/3/5 family. Forms a NOT protein complex that comprises NOT1, NOT2, NOT3, NOT4 and NOT5. Subunit of the 1.0 MDa CCR4-NOT core complex that contains CCR4, CAF1, NOT1, NOT2, NOT3, NOT4, NOT5, CAF40 and CAF130. In the complex interacts with NOT1 and NOT2. The core complex probably is part of a less characterized 1.9 MDa CCR4-NOT complex.

It localises to the cytoplasm. The protein resides in the nucleus. Its function is as follows. Acts as a component of the CCR4-NOT core complex, which in the nucleus seems to be a general transcription factor, and in the cytoplasm the major mRNA deadenylase involved in mRNA turnover. The NOT protein subcomplex negatively regulates the basal and activated transcription of many genes. Preferentially affects TC-type TATA element-dependent transcription. Could directly or indirectly inhibit component(s) of the general transcription machinery. This Saccharomyces cerevisiae (strain ATCC 204508 / S288c) (Baker's yeast) protein is General negative regulator of transcription subunit 5 (NOT5).